The primary structure comprises 783 residues: MRWQCGTRFRGLRPAVAPWTALLALGLPGWVLAVSATAAAVVPEQHASVAGQHPLDWLLTDRGPFHRAQEYADFMERYRQGFTTRYRIYREFARWKVNNLALERKDFFSLPLPLAPEFIRNIRLLGRRPNLQQVTENLIKKYGTHFLLSATLGGEESLTIFVDKQKLGRKTETTGGASIIGGSGNSTAVSLETLHQLAASYFIDRESTLRRLHHIQIATGAIKVTETRTGPLGCSNYDNLDSVSSVLVQSPENKVQLLGLQVLLPEYLRERFVAAALSYITCSSEGELVCKENDCWCKCSPTFPECNCPDADIQAMEDSLLQIQDSWATHNRQFEESEEFQALLKRLPDDRFLNSTAISQFWAMDTSLQHRYQQLGAGLKVLFKKTHRILRRLFNLCKRCHRQPRFRLPKERSLSYWWNRIQSLLYCGESTFPGTFLEQSHSCTCPYDQSSCQGPIPCALGEGPACAHCAPDNSTRCGSCNPGYVLAQGLCRPEVAESLENFLGLETDLQDLELKYLLQKQDSRIEVHSIFISNDMRLGSWFDPSWRKRMLLTLKSNKYKPGLVHVMLALSLQICLTKNSTLEPVMAIYVNPFGGSHSESWFMPVNEGSFPDWERTNVDAAAQCQNWTITLGNRWKTFFETVHVYLRSRIKSLDDSSNETIYYEPLEMTDPSKNLGYMKINTLQVFGYSLPFDPDAIRDLILQLDYPYTQGSQDSALLQLIELRDRVNQLSPPGKVRLDLFSCLLRHRLKLANNEVGRIQSSLRAFNSKLPNPVEYETGKLCS.

The first 33 residues, 1–33, serve as a signal peptide directing secretion; sequence MRWQCGTRFRGLRPAVAPWTALLALGLPGWVLA. Positions 85-281 constitute an MACPF domain; it reads RYRIYREFAR…FVAAALSYIT (197 aa). N-linked (GlcNAc...) asparagine glycosylation is found at Asn-185, Asn-354, Asn-473, Asn-579, Asn-626, and Asn-658.

Belongs to the BRINP family.

The protein resides in the secreted. Its function is as follows. Inhibits neuronal cell proliferation by negative regulation of the cell cycle transition. The polypeptide is BMP/retinoic acid-inducible neural-specific protein 2 (BRINP2) (Homo sapiens (Human)).